The sequence spans 161 residues: Allophycocyanin subunit alpha-B (161 aa).

N4-methylasparagine is present on N71. Residue C81 coordinates (2R,3E)-phycocyanobilin.

Belongs to the phycobiliprotein family. As to quaternary structure, heterohexamer of two alpha chains, one alpha-B chain and three beta chains. Post-translationally, contains one covalently linked phycocyanobilin chromophore. The chromophore is added by phycocyanobilin lyase CpcS 1.

The protein resides in the cellular thylakoid membrane. Functionally, light-harvesting photosynthetic bile pigment-protein from the phycobiliprotein complex. Allophycocyanin has a maximum absorption at approximately 654 nanometers. This chain is Allophycocyanin subunit alpha-B (apcD), found in Nostoc sp. (strain PCC 7120 / SAG 25.82 / UTEX 2576).